The chain runs to 3001 residues: BEACH domain-containing protein C2 (3001 aa).

7 disordered regions span residues Asp43–Gly80, Asp103–Val156, Asn1018–Ser1076, Thr1846–Lys1868, Tyr2039–Pro2071, Ala2101–Asn2132, and Asn2193–Trp2212. Ser48 bears the Phosphoserine mark. 3 stretches are compositionally biased toward polar residues: residues Asn57–Ser72, Ser121–Asp132, and Ser1037–Ser1050. Over residues Leu1854–Pro1863 the composition is skewed to pro residues. The segment covering Ala2101 to Ser2119 has biased composition (basic and acidic residues). Residues Arg2120–Arg2129 show a composition bias toward polar residues. Residues Glu2151 to Val2260 form the BEACH-type PH domain. Over residues Asp2196–Ser2211 the composition is skewed to basic and acidic residues. Positions Gln2275–Arg2564 constitute a BEACH domain. WD repeat units lie at residues Ser2679 to Thr2718, Gly2721 to Thr2760, Gly2802 to Arg2841, Leu2842 to Ala2881, and Gly2953 to Val2992.

The sequence is that of BEACH domain-containing protein C2 from Arabidopsis thaliana (Mouse-ear cress).